Here is a 220-residue protein sequence, read N- to C-terminus: Octanoyltransferase (220 aa).

A BPL/LPL catalytic domain is found at 34-209 (ENSQDEIWVV…TLSQELGLAN (176 aa)). Residues 73–80 (RGGQVTYH), 140–142 (SLG), and 153–155 (GLA) each bind substrate. Residue Cys-171 is the Acyl-thioester intermediate of the active site.

It belongs to the LipB family.

The protein localises to the cytoplasm. The catalysed reaction is octanoyl-[ACP] + L-lysyl-[protein] = N(6)-octanoyl-L-lysyl-[protein] + holo-[ACP] + H(+). It participates in protein modification; protein lipoylation via endogenous pathway; protein N(6)-(lipoyl)lysine from octanoyl-[acyl-carrier-protein]: step 1/2. Its function is as follows. Catalyzes the transfer of endogenously produced octanoic acid from octanoyl-acyl-carrier-protein onto the lipoyl domains of lipoate-dependent enzymes. Lipoyl-ACP can also act as a substrate although octanoyl-ACP is likely to be the physiological substrate. This is Octanoyltransferase from Shewanella piezotolerans (strain WP3 / JCM 13877).